Reading from the N-terminus, the 72-residue chain is Translation initiation factor IF-1 (72 aa).

The 72-residue stretch at 1–72 (MAKQSAIEKD…SKGRIAFRYK (72 aa)) folds into the S1-like domain.

It belongs to the IF-1 family. As to quaternary structure, component of the 30S ribosomal translation pre-initiation complex which assembles on the 30S ribosome in the order IF-2 and IF-3, IF-1 and N-formylmethionyl-tRNA(fMet); mRNA recruitment can occur at any time during PIC assembly.

Its subcellular location is the cytoplasm. One of the essential components for the initiation of protein synthesis. Stabilizes the binding of IF-2 and IF-3 on the 30S subunit to which N-formylmethionyl-tRNA(fMet) subsequently binds. Helps modulate mRNA selection, yielding the 30S pre-initiation complex (PIC). Upon addition of the 50S ribosomal subunit IF-1, IF-2 and IF-3 are released leaving the mature 70S translation initiation complex. This Parabacteroides distasonis (strain ATCC 8503 / DSM 20701 / CIP 104284 / JCM 5825 / NCTC 11152) protein is Translation initiation factor IF-1.